The sequence spans 206 residues: Octanoyltransferase (206 aa).

The BPL/LPL catalytic domain maps to 30-206 (PETNDEIWLV…EFVTLLNNSI (177 aa)). Substrate contacts are provided by residues 69–76 (RGGQVTYH), 137–139 (SLG), and 150–152 (GIA). Catalysis depends on C168, which acts as the Acyl-thioester intermediate.

The protein belongs to the LipB family.

The protein localises to the cytoplasm. It carries out the reaction octanoyl-[ACP] + L-lysyl-[protein] = N(6)-octanoyl-L-lysyl-[protein] + holo-[ACP] + H(+). The protein operates within protein modification; protein lipoylation via endogenous pathway; protein N(6)-(lipoyl)lysine from octanoyl-[acyl-carrier-protein]: step 1/2. Its function is as follows. Catalyzes the transfer of endogenously produced octanoic acid from octanoyl-acyl-carrier-protein onto the lipoyl domains of lipoate-dependent enzymes. Lipoyl-ACP can also act as a substrate although octanoyl-ACP is likely to be the physiological substrate. This chain is Octanoyltransferase, found in Francisella tularensis subsp. tularensis (strain FSC 198).